The following is a 350-amino-acid chain: Xylene/toluene monooxygenase electron transfer component XylA (350 aa).

The 2Fe-2S ferredoxin-type domain occupies 16–108; sequence PESTVSVRGQ…DLEIELDTVL (93 aa). 4 residues coordinate [2Fe-2S] cluster: cysteine 52, cysteine 57, cysteine 60, and cysteine 92. The segment at 109–350 is ferredoxin--NADH reductase; sequence GQALVPIETS…ADRFYNRPPC (242 aa). Positions 114-213 constitute an FAD-binding FR-type domain; that stretch reads PIETSALISK…RAPYGQFGLH (100 aa).

This sequence belongs to the bacterial ring-hydroxylating dioxygenase ferredoxin reductase family. As to quaternary structure, monomer. The xylene/toluene monooxygenase is composed of two subunits: the electron transfer component XylA and the hydroxylase component XylM. FAD is required as a cofactor. [2Fe-2S] cluster serves as cofactor.

The protein resides in the cell inner membrane. It catalyses the reaction 2 reduced [2Fe-2S]-[ferredoxin] + NAD(+) + H(+) = 2 oxidized [2Fe-2S]-[ferredoxin] + NADH. With respect to regulation, the reductase activity is completely inhibited by quercetin (a common inhibitor of mammalian oxidoreductases) and p-chloromercuribenzoate, but not by iodoacetimide, N-ethylmaleimide and pyrrazole. Its function is as follows. Component of a monooxygenase that catalyzes the first step in the degradation of xylenes and toluenes. XylA is responsible for the transport of electrons from the electron donor NADH to the terminal hydroxylase component, XylM. This Pseudomonas putida (Arthrobacter siderocapsulatus) protein is Xylene/toluene monooxygenase electron transfer component XylA.